The primary structure comprises 140 residues: uncharacterized protein (140 aa).

The first 22 residues, 1 to 22 (MRLRWQTIVLLLLILGGASASA), serve as a signal peptide directing secretion.

This is an uncharacterized protein from Archaeoglobus fulgidus (strain ATCC 49558 / DSM 4304 / JCM 9628 / NBRC 100126 / VC-16).